The sequence spans 292 residues: tRNA(Ile)-lysidine synthase (292 aa).

ATP is bound at residue serine 32–serine 37.

The protein belongs to the tRNA(Ile)-lysidine synthase family.

Its subcellular location is the cytoplasm. The enzyme catalyses cytidine(34) in tRNA(Ile2) + L-lysine + ATP = lysidine(34) in tRNA(Ile2) + AMP + diphosphate + H(+). Its function is as follows. Ligates lysine onto the cytidine present at position 34 of the AUA codon-specific tRNA(Ile) that contains the anticodon CAU, in an ATP-dependent manner. Cytidine is converted to lysidine, thus changing the amino acid specificity of the tRNA from methionine to isoleucine. The protein is tRNA(Ile)-lysidine synthase of Corynebacterium diphtheriae (strain ATCC 700971 / NCTC 13129 / Biotype gravis).